Reading from the N-terminus, the 284-residue chain is Tryptophan 2,3-dioxygenase (284 aa).

Substrate-binding positions include 53 to 57 (FIVQH), tyrosine 115, and arginine 119. Histidine 242 contacts heme. Threonine 256 provides a ligand contact to substrate.

The protein belongs to the tryptophan 2,3-dioxygenase family. In terms of assembly, homotetramer. It depends on heme as a cofactor.

The enzyme catalyses L-tryptophan + O2 = N-formyl-L-kynurenine. The protein operates within amino-acid degradation; L-tryptophan degradation via kynurenine pathway; L-kynurenine from L-tryptophan: step 1/2. In terms of biological role, heme-dependent dioxygenase that catalyzes the oxidative cleavage of the L-tryptophan (L-Trp) pyrrole ring and converts L-tryptophan to N-formyl-L-kynurenine. Catalyzes the oxidative cleavage of the indole moiety. The chain is Tryptophan 2,3-dioxygenase from Bordetella parapertussis (strain 12822 / ATCC BAA-587 / NCTC 13253).